Consider the following 1033-residue polypeptide: Isoleucine--tRNA ligase 2 (1033 aa).

Residues proline 47–histidine 57 carry the 'HIGH' region motif. A 'KMSKS' region motif is present at residues lysine 590–serine 594. Lysine 593 is an ATP binding site.

Belongs to the class-I aminoacyl-tRNA synthetase family. IleS type 2 subfamily. In terms of assembly, monomer. It depends on Zn(2+) as a cofactor.

The protein localises to the cytoplasm. The enzyme catalyses tRNA(Ile) + L-isoleucine + ATP = L-isoleucyl-tRNA(Ile) + AMP + diphosphate. Its function is as follows. Catalyzes the attachment of isoleucine to tRNA(Ile). As IleRS can inadvertently accommodate and process structurally similar amino acids such as valine, to avoid such errors it has two additional distinct tRNA(Ile)-dependent editing activities. One activity is designated as 'pretransfer' editing and involves the hydrolysis of activated Val-AMP. The other activity is designated 'posttransfer' editing and involves deacylation of mischarged Val-tRNA(Ile). This Bacillus cereus (strain ATCC 14579 / DSM 31 / CCUG 7414 / JCM 2152 / NBRC 15305 / NCIMB 9373 / NCTC 2599 / NRRL B-3711) protein is Isoleucine--tRNA ligase 2.